The sequence spans 179 residues: UPF0227 protein Shew185_2404 (179 aa).

It belongs to the UPF0227 family.

This Shewanella baltica (strain OS185) protein is UPF0227 protein Shew185_2404.